A 141-amino-acid polypeptide reads, in one-letter code: MVSKRRVLREMVVKLFFQREFRHNEFEEIFSETLNKIRDNTIKADFKRYVEGVFHNLSTIDNIISNHLINWSFDRLSYLERNVLRVGTYELIYEENIPIEVTINEMIEIAKKYGSEESGKFVNGILDRIAKEHAPKEKFNL.

The protein belongs to the NusB family.

In terms of biological role, involved in transcription antitermination. Required for transcription of ribosomal RNA (rRNA) genes. Binds specifically to the boxA antiterminator sequence of the ribosomal RNA (rrn) operons. The sequence is that of Transcription antitermination protein NusB from Fervidobacterium nodosum (strain ATCC 35602 / DSM 5306 / Rt17-B1).